Here is a 207-residue protein sequence, read N- to C-terminus: Ras-related protein rab7 (207 aa).

GTP contacts are provided by residues 15-22 (GDSGVGKT), 34-40 (SNQYKAT), 63-67 (DTAGQ), 125-128 (NKID), and 156-157 (AK). The Effector region signature appears at 37–45 (YKATIGADF). Residues Cys205 and Cys207 are each lipidated (S-geranylgeranyl cysteine). Position 207 is a cysteine methyl ester (Cys207).

Belongs to the small GTPase superfamily. Rab family. In terms of assembly, (Microbial infection) Interacts with Singapore grouper iridoviral proteins VP69 (ORF69) and VP101 (ORF101). In terms of tissue distribution, ubiquitously expressed. Expressed in liver, spleen, kidney, brain, intestine, heart, skin, muscle, gill and stomach.

The protein resides in the late endosome membrane. It localises to the lysosome membrane. Key regulator in endo-lysosomal trafficking. Governs early-to-late endosomal maturation, microtubule minus-end as well as plus-end directed endosomal migration and positioning, and endosome-lysosome transport through different protein-protein interaction cascades. Plays important roles in microbial pathogen infection and survival, as well as in participating in the life cycle of viruses. This is Ras-related protein rab7 from Epinephelus coioides (Orange-spotted grouper).